Consider the following 185-residue polypeptide: Protein N-terminal glutamine amidohydrolase (185 aa).

Active-site residues include Cys-14, His-62, and Asp-78.

This sequence belongs to the NTAQ1 family. As to quaternary structure, monomer.

It catalyses the reaction N-terminal L-glutaminyl-[protein] + H2O = N-terminal L-glutamyl-[protein] + NH4(+). Its function is as follows. Mediates the side-chain deamidation of N-terminal glutamine residues to glutamate, an important step in N-end rule pathway of protein degradation. Conversion of the resulting N-terminal glutamine to glutamate renders the protein susceptible to arginylation, polyubiquitination and degradation as specified by the N-end rule. Does not act on substrates with internal or C-terminal glutamine and does not act on non-glutamine residues in any position. This chain is Protein N-terminal glutamine amidohydrolase, found in Caenorhabditis briggsae.